A 68-amino-acid polypeptide reads, in one-letter code: P21 prophage-derived head-stabilizing protein (68 aa).

Belongs to the lambda phage gpW family.

This chain is P21 prophage-derived head-stabilizing protein, found in Escherichia coli O6:H1 (strain CFT073 / ATCC 700928 / UPEC).